The sequence spans 297 residues: Formamidopyrimidine-DNA glycosylase (297 aa).

P2 serves as the catalytic Schiff-base intermediate with DNA. The active-site Proton donor is the E3. The Proton donor; for beta-elimination activity role is filled by K58. DNA-binding residues include H104, R127, and K170. Residues 261–297 (NVYDREGEACRTPGCTGTVERMTQAGRSTFHCPQCQR) form an FPG-type zinc finger. The active-site Proton donor; for delta-elimination activity is R287.

The protein belongs to the FPG family. As to quaternary structure, monomer. Zn(2+) is required as a cofactor.

It carries out the reaction Hydrolysis of DNA containing ring-opened 7-methylguanine residues, releasing 2,6-diamino-4-hydroxy-5-(N-methyl)formamidopyrimidine.. The catalysed reaction is 2'-deoxyribonucleotide-(2'-deoxyribose 5'-phosphate)-2'-deoxyribonucleotide-DNA = a 3'-end 2'-deoxyribonucleotide-(2,3-dehydro-2,3-deoxyribose 5'-phosphate)-DNA + a 5'-end 5'-phospho-2'-deoxyribonucleoside-DNA + H(+). Functionally, involved in base excision repair of DNA damaged by oxidation or by mutagenic agents. Acts as a DNA glycosylase that recognizes and removes damaged bases. Has a preference for oxidized purines, such as 7,8-dihydro-8-oxoguanine (8-oxoG). Has AP (apurinic/apyrimidinic) lyase activity and introduces nicks in the DNA strand. Cleaves the DNA backbone by beta-delta elimination to generate a single-strand break at the site of the removed base with both 3'- and 5'-phosphates. The protein is Formamidopyrimidine-DNA glycosylase of Allorhizobium ampelinum (strain ATCC BAA-846 / DSM 112012 / S4) (Agrobacterium vitis (strain S4)).